Here is a 973-residue protein sequence, read N- to C-terminus: Vacuolar protein sorting-associated protein 18 homolog (973 aa).

At A2 the chain carries N-acetylalanine. S3, S11, and S13 each carry phosphoserine. K362 is subject to N6-acetyllysine. Positions 454-481 (EEIALKFLEARQEEALAEFLQRKLASLK) form a coiled coil. One copy of the CHCR repeat lies at 618–772 (GSRLDARQLI…VVQEEEDVQT (155 aa)). At S689 the chain carries Phosphoserine. Residues 802–848 (KEAICSSLKAYNHHIQELQREMEEATASAQRIRRDLQELRGRYGTVE) adopt a coiled-coil conformation. The RING-type zinc finger occupies 853-947 (CATCDFPLLN…ELVAAECVYC (95 aa)). A disordered region spans residues 903–929 (GAAPPPAKGSARAKEAEGGAATAGPSR). Residue S912 is modified to Phosphoserine.

It belongs to the VPS18 family. As to quaternary structure, core component of at least two putative endosomal tethering complexes, the homotypic fusion and vacuole protein sorting (HOPS) complex and the class C core vacuole/endosome tethering (CORVET) complex. Their common core is composed of the class C Vps proteins VPS11, VPS16, VPS18 and VPS33A, which in HOPS further associates with VPS39 and VPS41 and in CORVET with VPS8 and TGFBRAP1. Interacts with RAB5C. Interacts with HOOK1. Interacts with STX7, MON1B. Associates with adaptor protein complex 3 (AP-3) and clathrin:AP-3 complexes. Interacts with SYNPO2. Interacts with PLEKHM1. Ubiquitous. Expression was highest in heart and low in lung.

The protein resides in the late endosome membrane. Its subcellular location is the lysosome membrane. The protein localises to the early endosome. It is found in the cytoplasmic vesicle. It localises to the autophagosome. The protein resides in the clathrin-coated vesicle. Plays a role in vesicle-mediated protein trafficking to lysosomal compartments including the endocytic membrane transport and autophagic pathways. Believed to act as a core component of the putative HOPS and CORVET endosomal tethering complexes which are proposed to be involved in the Rab5-to-Rab7 endosome conversion probably implicating MON1A/B, and via binding SNAREs and SNARE complexes to mediate tethering and docking events during SNARE-mediated membrane fusion. The HOPS complex is proposed to be recruited to Rab7 on the late endosomal membrane and to regulate late endocytic, phagocytic and autophagic traffic towards lysosomes. The CORVET complex is proposed to function as a Rab5 effector to mediate early endosome fusion probably in specific endosome subpopulations. Required for fusion of endosomes and autophagosomes with lysosomes. Involved in dendrite development of Pukinje cells. In Homo sapiens (Human), this protein is Vacuolar protein sorting-associated protein 18 homolog.